Reading from the N-terminus, the 123-residue chain is uncharacterized protein (123 aa).

The disordered stretch occupies residues 100–123 (NKQPKTTHHFSTNSSEYKSRKSKH).

This is an uncharacterized protein from Acanthamoeba polyphaga mimivirus (APMV).